Reading from the N-terminus, the 59-residue chain is Alpha-like toxin CsEv5 (59 aa).

Residues 1–59 enclose the LCN-type CS-alpha/beta domain; the sequence is KDGYPVDSKGCKLSCVANNYCDNQCKMKKASGGHCYAMSCYCEGLPENAKVSDSATNIC. 4 disulfides stabilise this stretch: C11/C59, C15/C35, C21/C40, and C25/C42.

The protein belongs to the long (4 C-C) scorpion toxin superfamily. Sodium channel inhibitor family. Expressed by the venom gland.

It localises to the secreted. Functionally, binds voltage-independently sodium channels (Nav) and inhibits the inactivation of the activated channels, thereby blocking neuronal transmission. Is highly toxic to insects and barely toxic to mammals. As it does not compete with the classical alpha-toxin AaH2, this toxin is considered as an alpha-like toxin. This chain is Alpha-like toxin CsEv5, found in Centruroides sculpturatus (Arizona bark scorpion).